A 495-amino-acid chain; its full sequence is COP9 signalosome complex subunit 2 (495 aa).

The tract at residues 1–26 is disordered; that stretch reads MGDEYMDDDEDYGFEYEDDSGSEPDV. The PCI domain occupies 254-416; sequence AHTDFFEAFK…GMIEMPKNKK (163 aa). The segment at 426-468 is disordered; that stretch reads PNAGDQGTTKSDSKPGTSSEPSTTTSVTSSILQGPPATSSCHQ. Polar residues predominate over residues 430–441; it reads DQGTTKSDSKPG. A compositionally biased stretch (low complexity) spans 442–455; that stretch reads TSSEPSTTTSVTSS.

This sequence belongs to the CSN2 family. Component of the CSN complex, probably composed of csn-1, csn-2, csn-3, csn-4, csn-5, csn-6 and csn-7. Within the complex it probably interacts directly with csn-1, csn-3 and csn-4.

It localises to the cytoplasm. It is found in the nucleus. Functionally, essential component of the COP9 signalosome complex (CSN), a complex involved in various cellular and developmental processes. The CSN complex is an essential regulator of the ubiquitin (Ubl) conjugation pathway by mediating the deneddylation of the cullin subunits of the SCF-type E3 ligase complexes, leading to decrease the Ubl ligase activity of SCF. The CSN complex plays an essential role in embryogenesis and oogenesis and is required to regulate microtubule stability in the early embryo. Mediates mei-3/katanin targeting for degradation at the meiosis to mitosis transition via deneddylation of cul-3. This is COP9 signalosome complex subunit 2 (csn-2) from Caenorhabditis elegans.